Here is a 316-residue protein sequence, read N- to C-terminus: Ribosomal RNA large subunit methyltransferase F (316 aa).

The disordered stretch occupies residues 200–222; it reads EEANKSTSRKVSNLNPKEKKNTN. A compositionally biased stretch (polar residues) spans 204-214; that stretch reads KSTSRKVSNLN.

Belongs to the methyltransferase superfamily. METTL16/RlmF family.

It is found in the cytoplasm. It carries out the reaction adenosine(1618) in 23S rRNA + S-adenosyl-L-methionine = N(6)-methyladenosine(1618) in 23S rRNA + S-adenosyl-L-homocysteine + H(+). Functionally, specifically methylates the adenine in position 1618 of 23S rRNA. The sequence is that of Ribosomal RNA large subunit methyltransferase F from Flavobacterium johnsoniae (strain ATCC 17061 / DSM 2064 / JCM 8514 / BCRC 14874 / CCUG 350202 / NBRC 14942 / NCIMB 11054 / UW101) (Cytophaga johnsonae).